A 428-amino-acid polypeptide reads, in one-letter code: Maltoporin (428 aa).

The N-terminal stretch at 1 to 24 (MTTLRKLPIALAVAAGVLSTQAMA) is a signal peptide.

The protein belongs to the porin LamB (TC 1.B.3) family. As to quaternary structure, homotrimer formed of three 18-stranded antiparallel beta-barrels, containing three independent channels.

The protein resides in the cell outer membrane. It catalyses the reaction beta-maltose(in) = beta-maltose(out). In terms of biological role, involved in the transport of maltose and maltodextrins. In Yersinia enterocolitica serotype O:8 / biotype 1B (strain NCTC 13174 / 8081), this protein is Maltoporin.